We begin with the raw amino-acid sequence, 132 residues long: Small ribosomal subunit protein uS11 (132 aa).

Basic residues predominate over residues 1 to 16 (MAAGMKGKRSRRRKER). The segment at 1–20 (MAAGMKGKRSRRRKERKNVE) is disordered.

Belongs to the universal ribosomal protein uS11 family. As to quaternary structure, part of the 30S ribosomal subunit. Interacts with proteins S7 and S18. Binds to IF-3.

Located on the platform of the 30S subunit, it bridges several disparate RNA helices of the 16S rRNA. Forms part of the Shine-Dalgarno cleft in the 70S ribosome. The chain is Small ribosomal subunit protein uS11 from Clostridium botulinum (strain Hall / ATCC 3502 / NCTC 13319 / Type A).